The following is a 189-amino-acid chain: Elongation factor P (189 aa).

It belongs to the elongation factor P family.

Its subcellular location is the cytoplasm. The protein operates within protein biosynthesis; polypeptide chain elongation. Involved in peptide bond synthesis. Stimulates efficient translation and peptide-bond synthesis on native or reconstituted 70S ribosomes in vitro. Probably functions indirectly by altering the affinity of the ribosome for aminoacyl-tRNA, thus increasing their reactivity as acceptors for peptidyl transferase. This chain is Elongation factor P, found in Rhizobium leguminosarum bv. trifolii (strain WSM2304).